The chain runs to 192 residues: 7-methyl-GTP pyrophosphatase (192 aa).

Catalysis depends on Asp-69, which acts as the Proton acceptor.

The protein belongs to the Maf family. YceF subfamily. It depends on a divalent metal cation as a cofactor.

The protein localises to the cytoplasm. It catalyses the reaction N(7)-methyl-GTP + H2O = N(7)-methyl-GMP + diphosphate + H(+). Its function is as follows. Nucleoside triphosphate pyrophosphatase that hydrolyzes 7-methyl-GTP (m(7)GTP). May have a dual role in cell division arrest and in preventing the incorporation of modified nucleotides into cellular nucleic acids. This chain is 7-methyl-GTP pyrophosphatase, found in Pseudomonas savastanoi pv. phaseolicola (strain 1448A / Race 6) (Pseudomonas syringae pv. phaseolicola (strain 1448A / Race 6)).